The sequence spans 632 residues: Probable membrane transporter protein MamO (632 aa).

Residues Ala-25–Leu-45 form a helical membrane-spanning segment. A protease-like region spans residues Leu-78–Val-268. Residues His-148 and His-263 each coordinate a divalent metal cation. The next 7 membrane-spanning stretches (helical) occupy residues Ile-340–Val-360, Leu-412–Gly-432, Phe-434–Ile-454, Ala-513–Ile-533, Ile-550–Ile-570, Ala-582–Ala-602, and Val-612–Val-632. Positions Met-365–Val-632 are TSUP-like.

This sequence in the N-terminal section; belongs to the peptidase S1C family. The protein in the C-terminal section; belongs to the 4-toluene sulfonate uptake permease (TSUP) (TC 2.A.102) family. Requires a metal cation as cofactor. In terms of processing, subject to proteolytic cleavage by MamE.

It localises to the magnetosome membrane. Plays 2 roles; promotes magnetite nucleation/formation and activates the MamE protease. Despite its near conservation of a protease-like sequence, this is probably not a protease. Required in conjunction with MamP for proteolysis of at least MamE, itself and MamP. May transport a solute that controls MamE's protease activity. May place individual iron atoms into the magnetite lattice. One of 7 genes (mamLQBIEMO) able to induce magnetosome membrane biogenesis; coexpression of mamLQRBIEMO in a deletion of the 17 gene mamAB operon restores magnetosome vesicle formation but not magnetite biosynthesis. This is Probable membrane transporter protein MamO from Magnetospirillum gryphiswaldense (strain DSM 6361 / JCM 21280 / NBRC 15271 / MSR-1).